We begin with the raw amino-acid sequence, 187 residues long: UPF0301 protein PBPRA3139 (187 aa).

This sequence belongs to the UPF0301 (AlgH) family.

The polypeptide is UPF0301 protein PBPRA3139 (Photobacterium profundum (strain SS9)).